A 400-amino-acid polypeptide reads, in one-letter code: Lipid-A-disaccharide synthase (400 aa).

This sequence belongs to the LpxB family.

It catalyses the reaction a lipid X + a UDP-2-N,3-O-bis[(3R)-3-hydroxyacyl]-alpha-D-glucosamine = a lipid A disaccharide + UDP + H(+). It participates in bacterial outer membrane biogenesis; LPS lipid A biosynthesis. Condensation of UDP-2,3-diacylglucosamine and 2,3-diacylglucosamine-1-phosphate to form lipid A disaccharide, a precursor of lipid A, a phosphorylated glycolipid that anchors the lipopolysaccharide to the outer membrane of the cell. The chain is Lipid-A-disaccharide synthase from Acidobacterium capsulatum (strain ATCC 51196 / DSM 11244 / BCRC 80197 / JCM 7670 / NBRC 15755 / NCIMB 13165 / 161).